Here is a 236-residue protein sequence, read N- to C-terminus: C-&gt;U-editing enzyme APOBEC-1 (236 aa).

Residues Gly-10–Leu-134 enclose the CMP/dCMP-type deaminase domain. Zn(2+) is bound at residue His-61. Glu-63 (proton donor) is an active-site residue. Zn(2+)-binding residues include Cys-93 and Cys-96.

Belongs to the cytidine and deoxycytidylate deaminase family. Homodimer. Interacts with A1CF; form an mRNA editing complex. Interacts with RBM47; form an mRNA editing complex. Found in a complex with CELF2/CUGBP2 and A1CF. Interacts with HNRPAB. Interacts with SYNCRIP. Zn(2+) is required as a cofactor.

It localises to the cytoplasm. It is found in the nucleus. The enzyme catalyses a cytidine in mRNA + H2O + H(+) = a uridine in mRNA + NH4(+). The catalysed reaction is cytidine(6666) in apoB mRNA + H2O + H(+) = uridine(6666) in apoB mRNA + NH4(+). Cytidine deaminase catalyzing the cytidine to uridine postranscriptional editing of a variety of mRNAs. Form complexes with cofactors that confer differential editing activity and selectivity. Responsible for the postranscriptional editing of a CAA codon for Gln to a UAA codon for stop in the apolipoprotein B mRNA. Also involved in CGA (Arg) to UGA (Stop) editing in the NF1 mRNA. May also play a role in the epigenetic regulation of gene expression by participating in DNA demethylation. In Pongo pygmaeus (Bornean orangutan), this protein is C-&gt;U-editing enzyme APOBEC-1.